Here is a 285-residue protein sequence, read N- to C-terminus: Nucleotide-binding protein PSPPH_4154 (285 aa).

8-15 (GRSGSGKS) lines the ATP pocket. 60-63 (DARN) contributes to the GTP binding site.

This sequence belongs to the RapZ-like family.

Its function is as follows. Displays ATPase and GTPase activities. This Pseudomonas savastanoi pv. phaseolicola (strain 1448A / Race 6) (Pseudomonas syringae pv. phaseolicola (strain 1448A / Race 6)) protein is Nucleotide-binding protein PSPPH_4154.